A 423-amino-acid chain; its full sequence is Proline racemase A (423 aa).

Residues 1-31 form the signal peptide; the sequence is MRKSVCPKQKFFFSAFPFFFFFCVFPLISRT. Cysteine 160 acts as the Proton acceptor in catalysis. Residue 161–162 participates in substrate binding; sequence GH. N-linked (GlcNAc...) asparagine glycans are attached at residues asparagine 213, asparagine 266, and asparagine 282. Residue aspartate 326 coordinates substrate. Cysteine 330 (proton donor) is an active-site residue. Position 331-332 (331-332) interacts with substrate; it reads GT.

The protein belongs to the proline racemase family. Homodimer.

It is found in the secreted. Its subcellular location is the membrane. The protein resides in the cytoplasm. The enzyme catalyses L-proline = D-proline. With respect to regulation, inhibited by maleic acid, iodoacetamide, iodoacetate and, most particularly, pyrrole-2-carboxylic acid. Catalyzes the interconversion of L- and D-proline. Secreted isoform 1 contributes to parasite immune evasion by acting as a B-cell mitogen. Probably involved in parasite differentiation and infectivity. This Trypanosoma cruzi (strain CL Brener) protein is Proline racemase A (PA45-A).